A 121-amino-acid chain; its full sequence is Putative ferredoxin (121 aa).

The protein to E.coli YkgJ.

This Acinetobacter calcoaceticus protein is Putative ferredoxin.